We begin with the raw amino-acid sequence, 405 residues long: Peroxisomal membrane protein PEX13 (405 aa).

Over residues 1–11 (MASQPPPPPKP) the composition is skewed to pro residues. The segment at 1–71 (MASQPPPPPK…SQQTGSNNVN (71 aa)) is disordered. At 1-136 (MASQPPPPPK…SSRGAFQSIE (136 aa)) the chain is on the peroxisomal matrix side. A compositionally biased stretch (polar residues) spans 61-71 (PSQQTGSNNVN). A helical transmembrane segment spans residues 137 to 157 (SIVHAFASVSMMMDATFSAVY). A targeting to peroxisomes region spans residues 147 to 235 (MMMDATFSAV…EDQATNSAKS (89 aa)). Topologically, residues 158-176 (NSFRAVLDVANHFSRLKIH) are cytoplasmic. A helical membrane pass occupies residues 177–194 (FTKVFSAFALVRTIRYLY). The interaction with PEX19 stretch occupies residues 177–198 (FTKVFSAFALVRTIRYLYRRLQ). Residues 195-235 (RRLQWMMGLRRGSENEDLWAESEGTVACLSAEDQATNSAKS) lie on the Peroxisomal matrix side of the membrane. A helical transmembrane segment spans residues 236-256 (WPIFLFFAVILGGPYLIWKLL). Residues 257–405 (STHNDEVTDN…TGKNGDKQDL (149 aa)) lie on the Cytoplasmic side of the membrane. Residues 274 to 338 (DDHVVARAEY…PANYVKILGK (65 aa)) form the SH3 domain. At serine 356 the chain carries Phosphoserine.

It belongs to the peroxin-13 family. Interacts (via SH3 domain) with PEX14 (via SH3-binding motif); forming the PEX13-PEX14 docking complex. Interacts with PEX19.

It localises to the peroxisome membrane. Functionally, component of the PEX13-PEX14 docking complex, a translocon channel that specifically mediates the import of peroxisomal cargo proteins bound to PEX5 receptor. The PEX13-PEX14 docking complex forms a large import pore which can be opened to a diameter of about 9 nm. Mechanistically, PEX5 receptor along with cargo proteins associates with the PEX14 subunit of the PEX13-PEX14 docking complex in the cytosol, leading to the insertion of the receptor into the organelle membrane with the concomitant translocation of the cargo into the peroxisome matrix. Involved in the import of PTS1- and PTS2-type containing proteins. The chain is Peroxisomal membrane protein PEX13 from Mus musculus (Mouse).